We begin with the raw amino-acid sequence, 70 residues long: DNA-directed RNA polymerase subunit epsilon (70 aa).

Belongs to the RNA polymerase subunit epsilon family. In terms of assembly, RNAP is composed of a core of 2 alpha, a beta and a beta' subunit. The core is associated with a delta subunit, and at least one of epsilon or omega. When a sigma factor is associated with the core the holoenzyme is formed, which can initiate transcription.

It carries out the reaction RNA(n) + a ribonucleoside 5'-triphosphate = RNA(n+1) + diphosphate. In terms of biological role, a non-essential component of RNA polymerase (RNAP). In Bacillus cereus (strain ATCC 14579 / DSM 31 / CCUG 7414 / JCM 2152 / NBRC 15305 / NCIMB 9373 / NCTC 2599 / NRRL B-3711), this protein is DNA-directed RNA polymerase subunit epsilon.